Reading from the N-terminus, the 87-residue chain is Large ribosomal subunit protein bL27 (87 aa).

The protein belongs to the bacterial ribosomal protein bL27 family.

This is Large ribosomal subunit protein bL27 from Dichelobacter nodosus (strain VCS1703A).